A 162-amino-acid chain; its full sequence is Non-specific lipid transfer protein GPI-anchored 27 (162 aa).

A signal peptide spans 1 to 29 (MAYTNKVAVAVGAAVVFLAVVMNPRWTEA). 4 disulfides stabilise this stretch: Cys-39–Cys-78, Cys-50–Cys-62, Cys-63–Cys-102, and Cys-76–Cys-110. An N-linked (GlcNAc...) asparagine glycan is attached at Asn-68. N-linked (GlcNAc...) asparagine glycans are attached at residues Asn-124 and Asn-135. Residue Ser-137 is the site of GPI-anchor amidated serine attachment. The propeptide at 138-162 (VGGKNKVATSMSAFGLVAILLFVMF) is removed in mature form.

It belongs to the plant LTP family.

The protein resides in the cell membrane. Functionally, probable lipid transfer protein. The polypeptide is Non-specific lipid transfer protein GPI-anchored 27 (Arabidopsis thaliana (Mouse-ear cress)).